Here is an 802-residue protein sequence, read N- to C-terminus: Spondin-1 (802 aa).

An N-terminal signal peptide occupies residues 1-23; the sequence is MAARLRPLALRLLARTFPLVARG. Positions 24-189 constitute a Reelin domain; it reads FSDETLEKAA…DSASEGVTDK (166 aa). 17 cysteine pairs are disulfide-bonded: Cys-39-Cys-123, Cys-151-Cys-177, Cys-194-Cys-331, Cys-195-Cys-335, Cys-197-Cys-410, Cys-438-Cys-475, Cys-449-Cys-484, Cys-454-Cys-489, Cys-497-Cys-533, Cys-508-Cys-512, Cys-543-Cys-549, Cys-554-Cys-590, Cys-565-Cys-569, Cys-600-Cys-605, Cys-610-Cys-645, Cys-621-Cys-625, and Cys-655-Cys-660. A Spondin domain is found at 190–383; it reads PTLDCCACGT…LTSLDHPQSP (194 aa). Asn-209 carries N-linked (GlcNAc...) asparagine glycosylation. Positions 320, 349, and 353 each coordinate Ca(2+). TSP type-1 domains are found at residues 437-490, 496-550, 553-606, 609-661, 663-716, and 749-801; these read TCIY…PGCS, TCMM…EECS, SCLV…PECH, PCLL…PECP, DCEL…RKCL, and VCRL…NVHP. A glycan (N-linked (GlcNAc...) asparagine) is linked at Asn-676.

The protein resides in the secreted. Its subcellular location is the extracellular space. It localises to the extracellular matrix. Functionally, cell adhesion protein that promotes the attachment of spinal cord and sensory neuron cells and the outgrowth of neurites in vitro. May contribute to the growth and guidance of axons in both the spinal cord and the PNS. Somite-derived spondin 1 is an inhibitory signal involved in patterning the segmental migration of neural crest cells and their topographical segregation within the rostral somites in vitro. May be required to prevent the lateral drifting of the commissural axons after having crossed the floor plate. This Gallus gallus (Chicken) protein is Spondin-1 (SPON1).